Here is a 306-residue protein sequence, read N- to C-terminus: Metal ABC transporter substrate-binding lipoprotein SloC (306 aa).

A signal peptide spans 1 to 19; sequence MKKLSLLLLVCLSLLGLFA. Cys20 carries the N-palmitoyl cysteine lipid modification. Cys20 is lipidated: S-diacylglycerol cysteine. His64, His136, Glu202, and Asp277 together coordinate a divalent metal cation.

The protein belongs to the bacterial solute-binding protein 9 family. Lipoprotein receptor antigen (Lrai) subfamily.

It localises to the cell membrane. Its function is as follows. Part of the ATP-binding cassette (ABC) transport system SloABC involved in metal import. Binds a metal with high affinity and specificity and delivers it to the membrane permease for translocation into the cytoplasm. May act as an adhesin which is involved on adherence to extracellular matrix. It is an important factor in pathogenesis and infection. May contribute to the formation and accumulation of dental plaque. This is Metal ABC transporter substrate-binding lipoprotein SloC (sloC) from Streptococcus mutans serotype c (strain ATCC 700610 / UA159).